A 585-amino-acid chain; its full sequence is Probable G-protein coupled receptor Mth-like 10 (585 aa).

Positions methionine 1–glycine 32 are cleaved as a signal peptide. The Extracellular segment spans residues isoleucine 33–serine 250. 5 disulfide bridges follow: cysteine 56–cysteine 110, cysteine 112–cysteine 117, cysteine 121–cysteine 216, cysteine 122–cysteine 135, and cysteine 177–cysteine 236. N-linked (GlcNAc...) asparagine glycosylation is found at asparagine 63 and asparagine 72. 5 N-linked (GlcNAc...) asparagine glycosylation sites follow: asparagine 142, asparagine 152, asparagine 157, asparagine 198, and asparagine 223. A helical membrane pass occupies residues tyrosine 251–proline 271. Residues glutamate 272–serine 280 lie on the Cytoplasmic side of the membrane. A helical membrane pass occupies residues leucine 281–tyrosine 301. The Extracellular segment spans residues glutamine 302–valine 312. The helical transmembrane segment at phenylalanine 313–phenylalanine 333 threads the bilayer. The Cytoplasmic portion of the chain corresponds to aspartate 334–arginine 353. Residues phenylalanine 354–cysteine 374 traverse the membrane as a helical segment. At alanine 375–alanine 404 the chain is on the extracellular side. Residues methionine 405 to methionine 425 form a helical membrane-spanning segment. The Cytoplasmic portion of the chain corresponds to threonine 426–arginine 466. A helical transmembrane segment spans residues phenylalanine 467 to serine 487. The Extracellular portion of the chain corresponds to tyrosine 488–lysine 498. A helical transmembrane segment spans residues leucine 499–valine 519. The Cytoplasmic portion of the chain corresponds to methionine 520–arginine 585.

The protein belongs to the G-protein coupled receptor 2 family. Mth subfamily.

It is found in the cell membrane. This is Probable G-protein coupled receptor Mth-like 10 (mthl10) from Drosophila melanogaster (Fruit fly).